The primary structure comprises 41 residues: ORF3c protein (41 aa).

Its function is as follows. May play a role in host modulation. The sequence is that of ORF3c protein from Severe acute respiratory syndrome coronavirus 2 (2019-nCoV).